Reading from the N-terminus, the 256-residue chain is Pimeloyl-[acyl-carrier protein] methyl ester esterase (256 aa).

The region spanning 15–242 is the AB hydrolase-1 domain; it reads HLVLLHGWGL…AAHAPFISHP (228 aa). Substrate is bound by residues Trp-22, 82 to 83, and 143 to 147; these read SL and FLALQ. Ser-82 serves as the catalytic Nucleophile. Active-site residues include Asp-207 and His-235. His-235 serves as a coordination point for substrate.

Belongs to the AB hydrolase superfamily. Carboxylesterase BioH family. Monomer.

The protein resides in the cytoplasm. It catalyses the reaction 6-carboxyhexanoyl-[ACP] methyl ester + H2O = 6-carboxyhexanoyl-[ACP] + methanol + H(+). Its pathway is cofactor biosynthesis; biotin biosynthesis. Functionally, the physiological role of BioH is to remove the methyl group introduced by BioC when the pimeloyl moiety is complete. It allows to synthesize pimeloyl-ACP via the fatty acid synthetic pathway through the hydrolysis of the ester bonds of pimeloyl-ACP esters. The chain is Pimeloyl-[acyl-carrier protein] methyl ester esterase from Escherichia coli (strain K12 / MC4100 / BW2952).